The following is a 105-amino-acid chain: Serine protease inhibitor Kazal-type 6 (105 aa).

A signal peptide spans 1 to 23; the sequence is MKVAGVFLLLSLALLCFFSGEFS. Gln-24 carries the post-translational modification Pyrrolidone carboxylic acid. The region spanning 49-105 is the Kazal-like domain; it reads RLFQINCGEFRDPKVFCTRESDPLCGSDGQTYGNKCAFCKALEKSSGKINLKHRGKC. 3 cysteine pairs are disulfide-bonded: Cys-55-Cys-87, Cys-65-Cys-84, and Cys-73-Cys-105.

Its subcellular location is the secreted. In terms of biological role, serine protease inhibitor selective for kallikreins. Efficiently inhibits KLK4, KLK5, KLK6, KLK7, KLK12, KLK13 and KLK14. Doesn't inhibit KLK8. This Rattus norvegicus (Rat) protein is Serine protease inhibitor Kazal-type 6 (Spink6).